We begin with the raw amino-acid sequence, 190 residues long: MRGLRPALSTFIFLLLITGGVYPLLTTALGQWWFPWQANGSLIREGDTVRGSALIGQNFTDNGYFHGRPSATAEMPYNPQASGGSNLAVSNPELDKLIAARVAALRAANPNASTSVPVELVTASASGLDNNITPQAAAWQIPRVAKARNLSVEQLTQLIAKYSQQPLVKYIGQPVVNIVELNLALDKLDE.

A helical membrane pass occupies residues 10 to 30; it reads TFIFLLLITGGVYPLLTTALG.

It belongs to the KdpC family. The system is composed of three essential subunits: KdpA, KdpB and KdpC.

Its subcellular location is the cell inner membrane. Its function is as follows. Part of the high-affinity ATP-driven potassium transport (or Kdp) system, which catalyzes the hydrolysis of ATP coupled with the electrogenic transport of potassium into the cytoplasm. This subunit acts as a catalytic chaperone that increases the ATP-binding affinity of the ATP-hydrolyzing subunit KdpB by the formation of a transient KdpB/KdpC/ATP ternary complex. The sequence is that of Potassium-transporting ATPase KdpC subunit from Escherichia coli O157:H7.